We begin with the raw amino-acid sequence, 385 residues long: Probable tRNA sulfurtransferase (385 aa).

In terms of domain architecture, THUMP spans 57 to 160 (DGVIERVKKV…RGNAYVFTDK (104 aa)). ATP contacts are provided by residues 180 to 181 (ML), 205 to 206 (YY), R262, G284, and Q293.

This sequence belongs to the ThiI family.

The protein localises to the cytoplasm. The enzyme catalyses [ThiI sulfur-carrier protein]-S-sulfanyl-L-cysteine + a uridine in tRNA + 2 reduced [2Fe-2S]-[ferredoxin] + ATP + H(+) = [ThiI sulfur-carrier protein]-L-cysteine + a 4-thiouridine in tRNA + 2 oxidized [2Fe-2S]-[ferredoxin] + AMP + diphosphate. It carries out the reaction [ThiS sulfur-carrier protein]-C-terminal Gly-Gly-AMP + S-sulfanyl-L-cysteinyl-[cysteine desulfurase] + AH2 = [ThiS sulfur-carrier protein]-C-terminal-Gly-aminoethanethioate + L-cysteinyl-[cysteine desulfurase] + A + AMP + 2 H(+). Its pathway is cofactor biosynthesis; thiamine diphosphate biosynthesis. In terms of biological role, catalyzes the ATP-dependent transfer of a sulfur to tRNA to produce 4-thiouridine in position 8 of tRNAs, which functions as a near-UV photosensor. Also catalyzes the transfer of sulfur to the sulfur carrier protein ThiS, forming ThiS-thiocarboxylate. This is a step in the synthesis of thiazole, in the thiamine biosynthesis pathway. The sulfur is donated as persulfide by IscS. This Clostridium perfringens (strain 13 / Type A) protein is Probable tRNA sulfurtransferase.